Consider the following 411-residue polypeptide: Putative ion-transport protein YfeO (411 aa).

The next 11 helical transmembrane spans lie at 9–29 (MLLL…VLIA), 54–74 (DSPF…GLII), 99–119 (ALPG…SLGP), 149–169 (ILAS…AALI), 186–206 (LFAP…FFHP), 223–243 (IASG…AVWC), 258–278 (VLIL…GGPL), 296–316 (LGAG…VIAA), 322–342 (GGRI…LHAH), 343–363 (VEAV…VLVV), and 386–406 (LLCI…LLAA).

It belongs to the chloride channel (TC 2.A.49) family.

The protein localises to the cell membrane. In Salmonella paratyphi A (strain ATCC 9150 / SARB42), this protein is Putative ion-transport protein YfeO.